The following is a 637-amino-acid chain: Acetolactate synthase 2, chloroplastic (637 aa).

The N-terminal 73 residues, 1-73 (MASFSFFGTI…SSKYAPNVPR (73 aa)), are a transit peptide targeting the chloroplast. The disordered stretch occupies residues 35-69 (RRATRVSVSANSKKDQDRTASRRENPSTFSSKYAP). A compositionally biased stretch (basic and acidic residues) spans 46 to 59 (SKKDQDRTASRREN). Glu-120 is a thiamine diphosphate binding site. FAD is bound by residues Arg-222, 329–350 (HGTVYANYAVEYSDLLLAFGVR), and 372–391 (DIDSTEIGKNKTPHVSVCCD). The tract at residues 462–542 (QHQMWAAQFY…VKVLLINNQH (81 aa)) is thiamine pyrophosphate binding. Residues Asp-513 and Asn-540 each coordinate Mg(2+).

This sequence belongs to the TPP enzyme family. It depends on Mg(2+) as a cofactor. Thiamine diphosphate serves as cofactor.

Its subcellular location is the plastid. It is found in the chloroplast. The enzyme catalyses 2 pyruvate + H(+) = (2S)-2-acetolactate + CO2. The protein operates within amino-acid biosynthesis; L-isoleucine biosynthesis; L-isoleucine from 2-oxobutanoate: step 1/4. Its pathway is amino-acid biosynthesis; L-valine biosynthesis; L-valine from pyruvate: step 1/4. This chain is Acetolactate synthase 2, chloroplastic, found in Brassica napus (Rape).